A 173-amino-acid polypeptide reads, in one-letter code: Shikimate kinase (173 aa).

14-19 (GAGKST) is an ATP binding site. Ser-18 contacts Mg(2+). Substrate contacts are provided by Asp-36, Arg-60, and Gly-82. Arg-120 lines the ATP pocket. Position 139 (Arg-139) interacts with substrate. Gln-156 lines the ATP pocket.

Belongs to the shikimate kinase family. In terms of assembly, monomer. It depends on Mg(2+) as a cofactor.

It localises to the cytoplasm. The catalysed reaction is shikimate + ATP = 3-phosphoshikimate + ADP + H(+). The protein operates within metabolic intermediate biosynthesis; chorismate biosynthesis; chorismate from D-erythrose 4-phosphate and phosphoenolpyruvate: step 5/7. Functionally, catalyzes the specific phosphorylation of the 3-hydroxyl group of shikimic acid using ATP as a cosubstrate. This is Shikimate kinase from Actinobacillus pleuropneumoniae serotype 5b (strain L20).